Reading from the N-terminus, the 97-residue chain is YcgL domain-containing protein PST_1364 (97 aa).

The region spanning Leu-3–Pro-87 is the YcgL domain.

The sequence is that of YcgL domain-containing protein PST_1364 from Stutzerimonas stutzeri (strain A1501) (Pseudomonas stutzeri).